The following is a 445-amino-acid chain: D-serine transporter DsdX (445 aa).

Residues 1 to 4 (MHSQ) lie on the Cytoplasmic side of the membrane. A helical membrane pass occupies residues 5–25 (IWVVSTLLISIVLIVLTIVKF). At 26–28 (KFH) the chain is on the periplasmic side. A helical transmembrane segment spans residues 29–49 (PFLALLLASFFVGTMMGMGPL). The Cytoplasmic portion of the chain corresponds to 50–56 (DMVNAIE). Residues 57-77 (SGIGGTLGFLAAVIGLGTILG) form a helical membrane-spanning segment. Over 78 to 105 (KMMEVSGAAERIGLTLQRCRWLSVDVIM) the chain is Periplasmic. The chain crosses the membrane as a helical span at residues 106–126 (VLVGLICGITLFVEVGVVLLI). At 127-139 (PLAFSIAKKTNTS) the chain is on the cytoplasmic side. The chain crosses the membrane as a helical span at residues 140 to 160 (LLKLAIPLCTALMAVHCVVPP). At 161-177 (HPAALYVANKLGADIGS) the chain is on the periplasmic side. The helical transmembrane segment at 178–198 (VIVYGLLVGLMASLIGGPLFL) threads the bilayer. The Cytoplasmic segment spans residues 199-223 (KFLGQRLPFKPVPTEFADLKVRDEK). The helical transmembrane segment at 224–244 (TLPSLGATLFTILLPIALMLV) threads the bilayer. Residues 245 to 257 (KTIAELNMARESG) are Periplasmic-facing. Residues 258–278 (LYILVEFIGNPITAMFIAVFV) traverse the membrane as a helical segment. Topologically, residues 279 to 301 (AYYVLGIRQHMSMGTMLTHTENG) are cytoplasmic. The chain crosses the membrane as a helical span at residues 302 to 322 (FGSIANILLIIGAGGAFNAIL). Residues 323 to 342 (KSSSLADTLAVILSNMHMHP) lie on the Periplasmic side of the membrane. Transmembrane regions (helical) follow at residues 343 to 363 (ILLAWLVALILHAAVGSATVA), 364 to 384 (MMGATAIVAPMLPLYPDISPE), and 385 to 405 (IIAIAIGSGAIGCTIVTDSLF). Residues 406-424 (WLVKQYCGATLNETFKYYT) lie on the Cytoplasmic side of the membrane. Residues 425–445 (TATFIASVVALAGTFLLSFII) form a helical membrane-spanning segment.

It belongs to the GntP permease family.

The protein resides in the cell inner membrane. In terms of biological role, a D-serine-specific transporter, may function as a H(+) symporter. The chain is D-serine transporter DsdX from Escherichia coli (strain K12).